The following is an 858-amino-acid chain: DNA mismatch repair protein MutS (858 aa).

Position 603–610 (603–610 (GPNMSGKS)) interacts with ATP.

The protein belongs to the DNA mismatch repair MutS family.

Functionally, this protein is involved in the repair of mismatches in DNA. It is possible that it carries out the mismatch recognition step. This protein has a weak ATPase activity. In Streptococcus agalactiae serotype Ia (strain ATCC 27591 / A909 / CDC SS700), this protein is DNA mismatch repair protein MutS.